We begin with the raw amino-acid sequence, 247 residues long: Small ribosomal subunit protein uS2 (247 aa).

It belongs to the universal ribosomal protein uS2 family.

In Fusobacterium nucleatum subsp. nucleatum (strain ATCC 25586 / DSM 15643 / BCRC 10681 / CIP 101130 / JCM 8532 / KCTC 2640 / LMG 13131 / VPI 4355), this protein is Small ribosomal subunit protein uS2.